The sequence spans 35 residues: Conotoxin Cal6.1c (35 aa).

A propeptide spanning residues 1 to 35 (GLNRPSKRCLAGSAPCEFHKRSTCCSGHCIIWWCA) is cleaved from the precursor. 3 disulfide bridges follow: Cys9/Cys25, Cys16/Cys29, and Cys24/Cys34.

The protein belongs to the conotoxin O1 superfamily. Expressed by the venom duct.

It is found in the secreted. Its function is as follows. Probable neurotoxin with unknown target. Possibly targets ion channels. In Californiconus californicus (California cone), this protein is Conotoxin Cal6.1c.